A 689-amino-acid polypeptide reads, in one-letter code: MNTVTLLIEIGTEELPTRAVTELASAGAQLWDNVLTTALIPHGEIEAFGTPRRLAWRVRQLAVKQTDQKIERKGPSLQAAKDKNNAWTKAALGFAASCGVDVEQLAIETTEKGQWLIFRGEKMGENVADLLPDLFAEVMDKLPIAKRMRWGDCDHAFVRPVHNLLVLADDNVWDLEFFGVASQHLSQGHRVHHAEPVAIRHAKTYEADLEAAYVIVDHETRCNRIREQVQALARDLGGKALMPEALVKEVASLTEWPIAIAGAFDRSFLKMPPEVLITTMQDHQKTFAVMDTLGTLLPYFIAVANLESRNEEEVRKGNEKVIRPRFADAEFFWQQDLKRPLEDYLPQLERVIYQEKLGTLAEKTRRVQTIACELTAMTAADKNSVYTAARLAKSDLQTAMVQEFPELQGVMGRYYALHQGLSAEVAQALEEQYFPTAAGDKLPQTAVGITLSIAEKLDTLIGGFSIGAQPTGSKDPYALRRMAIGLIRLLIEKKVPLLLTPWLEKAAGQFHDALGAKNFVMDVRAYILERLQAYYREQNIAPEIVQAVLALNGDNLVDIDQRVRALAPFSNSDAALSFFASAKRIRNILKKNGTQQTAVRTDLLQESAEKHLWQQWEQMHNALLAAVSAGNYETALQQLGSLAEPLEAFFAQVMVMTENPDVQINRLALLTALQKGFELIADLSIISNL.

Belongs to the class-II aminoacyl-tRNA synthetase family. Tetramer of two alpha and two beta subunits.

The protein resides in the cytoplasm. The catalysed reaction is tRNA(Gly) + glycine + ATP = glycyl-tRNA(Gly) + AMP + diphosphate. In Dichelobacter nodosus (strain VCS1703A), this protein is Glycine--tRNA ligase beta subunit.